We begin with the raw amino-acid sequence, 98 residues long: NADH-ubiquinone oxidoreductase chain 4L (98 aa).

A run of 3 helical transmembrane segments spans residues 1-21 (MTLVHMNLLLAFAMSLTGLLM), 26-46 (LMSALLCLEGMVLSLFILATI), and 59-79 (MPIILLVFAACEAAIGLALLV).

Belongs to the complex I subunit 4L family. In terms of assembly, core subunit of respiratory chain NADH dehydrogenase (Complex I) which is composed of 45 different subunits.

It is found in the mitochondrion inner membrane. It carries out the reaction a ubiquinone + NADH + 5 H(+)(in) = a ubiquinol + NAD(+) + 4 H(+)(out). Its function is as follows. Core subunit of the mitochondrial membrane respiratory chain NADH dehydrogenase (Complex I) which catalyzes electron transfer from NADH through the respiratory chain, using ubiquinone as an electron acceptor. Part of the enzyme membrane arm which is embedded in the lipid bilayer and involved in proton translocation. In Pontoporia blainvillei (Franciscana), this protein is NADH-ubiquinone oxidoreductase chain 4L (MT-ND4L).